Here is a 296-residue protein sequence, read N- to C-terminus: Glycine--tRNA ligase alpha subunit (296 aa).

The protein belongs to the class-II aminoacyl-tRNA synthetase family. As to quaternary structure, tetramer of two alpha and two beta subunits.

It is found in the cytoplasm. It catalyses the reaction tRNA(Gly) + glycine + ATP = glycyl-tRNA(Gly) + AMP + diphosphate. The polypeptide is Glycine--tRNA ligase alpha subunit (Francisella philomiragia subsp. philomiragia (strain ATCC 25017 / CCUG 19701 / FSC 153 / O#319-036)).